The sequence spans 128 residues: Lymphocyte antigen 6 complex locus protein G5c (128 aa).

Positions 1 to 29 are cleaved as a signal peptide; that stretch reads MGAEYGCLPSTSQALYVILLIVLVRMSLV. One can recognise a UPAR/Ly6 domain in the interval 37-128; sequence LRCYRCLLET…NPQNRVFYIP (92 aa). 5 disulfides stabilise this stretch: cysteine 39–cysteine 66, cysteine 42–cysteine 51, cysteine 58–cysteine 85, cysteine 94–cysteine 111, and cysteine 112–cysteine 117. Asparagine 73 carries an N-linked (GlcNAc...) asparagine glycan.

Forms oligomers. In terms of processing, N-glycosylated. Abundantly expressed in the epididymis.

The protein resides in the secreted. In terms of biological role, may have a role in hematopoietic cell differentiation. This Canis lupus familiaris (Dog) protein is Lymphocyte antigen 6 complex locus protein G5c (LY6G5C).